The sequence spans 446 residues: D-inositol 3-phosphate glycosyltransferase (446 aa).

Position 19 (His19) interacts with 1D-myo-inositol 3-phosphate. UDP-N-acetyl-alpha-D-glucosamine contacts are provided by residues 25-26 (QP) and Gly33. 1D-myo-inositol 3-phosphate-binding positions include 30–35 (DAGGMN), Lys88, Tyr121, Thr145, and Arg165. 3 residues coordinate UDP-N-acetyl-alpha-D-glucosamine: Arg239, Lys244, and Gln303. Residues Tyr312, Arg313, and Ser315 each contribute to the Mg(2+) site. UDP-N-acetyl-alpha-D-glucosamine is bound by residues Glu325 and Glu333. Thr339 contributes to the Mg(2+) binding site.

Belongs to the glycosyltransferase group 1 family. MshA subfamily. Homodimer.

It catalyses the reaction 1D-myo-inositol 3-phosphate + UDP-N-acetyl-alpha-D-glucosamine = 1D-myo-inositol 2-acetamido-2-deoxy-alpha-D-glucopyranoside 3-phosphate + UDP + H(+). Catalyzes the transfer of a N-acetyl-glucosamine moiety to 1D-myo-inositol 3-phosphate to produce 1D-myo-inositol 2-acetamido-2-deoxy-glucopyranoside 3-phosphate in the mycothiol biosynthesis pathway. The polypeptide is D-inositol 3-phosphate glycosyltransferase (Rhodococcus opacus (strain B4)).